We begin with the raw amino-acid sequence, 129 residues long: Aspartate 1-decarboxylase (129 aa).

The active-site Schiff-base intermediate with substrate; via pyruvic acid is the Ser25. Ser25 is subject to Pyruvic acid (Ser). Thr57 is a substrate binding site. Catalysis depends on Tyr58, which acts as the Proton donor. Gly73–Ala75 contacts substrate.

The protein belongs to the PanD family. In terms of assembly, heterooctamer of four alpha and four beta subunits. Requires pyruvate as cofactor. In terms of processing, is synthesized initially as an inactive proenzyme, which is activated by self-cleavage at a specific serine bond to produce a beta-subunit with a hydroxyl group at its C-terminus and an alpha-subunit with a pyruvoyl group at its N-terminus.

The protein localises to the cytoplasm. It catalyses the reaction L-aspartate + H(+) = beta-alanine + CO2. Its pathway is cofactor biosynthesis; (R)-pantothenate biosynthesis; beta-alanine from L-aspartate: step 1/1. Its function is as follows. Catalyzes the pyruvoyl-dependent decarboxylation of aspartate to produce beta-alanine. This chain is Aspartate 1-decarboxylase, found in Prosthecochloris aestuarii (strain DSM 271 / SK 413).